A 354-amino-acid polypeptide reads, in one-letter code: GDSL esterase/lipase At5g03820 (354 aa).

The first 24 residues, 1 to 24 (MKMFIIMLMTFSVIACFYAGVGTG), serve as a signal peptide directing secretion. The active-site Nucleophile is S37. N-linked (GlcNAc...) asparagine glycans are attached at residues N66, N100, N237, N256, N257, N261, and N321. Residues D329 and H332 contribute to the active site.

The protein belongs to the 'GDSL' lipolytic enzyme family.

The protein localises to the secreted. The chain is GDSL esterase/lipase At5g03820 from Arabidopsis thaliana (Mouse-ear cress).